We begin with the raw amino-acid sequence, 618 residues long: MKQSKLLIPTLREMPSDAQVISHALMVRAGYVRQVSAGIYAYLPLANRTIEKFKTIMREEFEKIGAVEMLAPALLTADLWRESGRYETYGEDLYKLKNRDNSDFILGPTHEETFTTLVRDAVKSYKQLPLNLYQIQSKYRDEKRPRNGLLRTREFIMKDGYSFHHNYEDLDVTYEDYRQAYEAIFTRAGLDFKGIIGDGGAMGGKDSQEFMAITPARTDLDRWVVLDKSIASMDDIPKEVLEEIKAELAAWMISGEDTIAYSTESSYAANLEMATNEYKPSSKVAAEDALAEVETPHCKTIDEVAAFLSVDETQTIKTLLFVADNEPVVALLVGNDHINTVKLKNYLAADFLEPASEEEARAFFGAGFGSLGPVNLAQGSRIVADRKVQNLTNAVAGANKDGFHVTGVNPGRDFQAEYVDIREVKEGEMSPDGHGVLQFARGIEVGHIFKLGTRYSDSMGATILDENGRTVPIVMGCYGIGVSRILSAVIEQHARLFVNKTPKGDYRYAWGINFPKELAPFDVHLITVNVKDQVAQDLTAKLEADLMAKGYDVLTDDRNERVGSKFSDSDLIGLPIRVTVGKKAAEGIVEIKIKATGDSIEVNAENLIETLEILTKEH.

The protein belongs to the class-II aminoacyl-tRNA synthetase family. ProS type 1 subfamily. In terms of assembly, homodimer.

The protein resides in the cytoplasm. It carries out the reaction tRNA(Pro) + L-proline + ATP = L-prolyl-tRNA(Pro) + AMP + diphosphate. Functionally, catalyzes the attachment of proline to tRNA(Pro) in a two-step reaction: proline is first activated by ATP to form Pro-AMP and then transferred to the acceptor end of tRNA(Pro). As ProRS can inadvertently accommodate and process non-cognate amino acids such as alanine and cysteine, to avoid such errors it has two additional distinct editing activities against alanine. One activity is designated as 'pretransfer' editing and involves the tRNA(Pro)-independent hydrolysis of activated Ala-AMP. The other activity is designated 'posttransfer' editing and involves deacylation of mischarged Ala-tRNA(Pro). The misacylated Cys-tRNA(Pro) is not edited by ProRS. The protein is Proline--tRNA ligase of Streptococcus pyogenes serotype M4 (strain MGAS10750).